A 428-amino-acid chain; its full sequence is 3-phosphoshikimate 1-carboxyvinyltransferase (428 aa).

The 3-phosphoshikimate site is built by Lys23, Ser24, and Arg28. Residue Lys23 participates in phosphoenolpyruvate binding. Residues Gly97 and Arg125 each coordinate phosphoenolpyruvate. 3-phosphoshikimate is bound by residues Ser170, Ser171, Gln172, Ser198, Asp314, Asn337, and Lys341. Residue Gln172 coordinates phosphoenolpyruvate. Asp314 (proton acceptor) is an active-site residue. Residues Arg345, Arg387, and Lys412 each contribute to the phosphoenolpyruvate site.

This sequence belongs to the EPSP synthase family. In terms of assembly, monomer.

The protein localises to the cytoplasm. The catalysed reaction is 3-phosphoshikimate + phosphoenolpyruvate = 5-O-(1-carboxyvinyl)-3-phosphoshikimate + phosphate. Its pathway is metabolic intermediate biosynthesis; chorismate biosynthesis; chorismate from D-erythrose 4-phosphate and phosphoenolpyruvate: step 6/7. In terms of biological role, catalyzes the transfer of the enolpyruvyl moiety of phosphoenolpyruvate (PEP) to the 5-hydroxyl of shikimate-3-phosphate (S3P) to produce enolpyruvyl shikimate-3-phosphate and inorganic phosphate. This chain is 3-phosphoshikimate 1-carboxyvinyltransferase, found in Erwinia tasmaniensis (strain DSM 17950 / CFBP 7177 / CIP 109463 / NCPPB 4357 / Et1/99).